Here is a 337-residue protein sequence, read N- to C-terminus: Holliday junction branch migration complex subunit RuvB (337 aa).

The segment at Met-1 to Val-20 is disordered. Positions Met-1–Tyr-181 are large ATPase domain (RuvB-L). Residues Arg-21, Gly-62, Lys-65, Thr-66, Thr-67, Glu-128–Tyr-130, Arg-171, Tyr-181, and Arg-218 each bind ATP. Thr-66 is a binding site for Mg(2+). A small ATPAse domain (RuvB-S) region spans residues Asp-182–Gly-252. The tract at residues Gln-255–Leu-337 is head domain (RuvB-H). Positions 310 and 315 each coordinate DNA.

It belongs to the RuvB family. As to quaternary structure, homohexamer. Forms an RuvA(8)-RuvB(12)-Holliday junction (HJ) complex. HJ DNA is sandwiched between 2 RuvA tetramers; dsDNA enters through RuvA and exits via RuvB. An RuvB hexamer assembles on each DNA strand where it exits the tetramer. Each RuvB hexamer is contacted by two RuvA subunits (via domain III) on 2 adjacent RuvB subunits; this complex drives branch migration. In the full resolvosome a probable DNA-RuvA(4)-RuvB(12)-RuvC(2) complex forms which resolves the HJ.

The protein localises to the cytoplasm. The enzyme catalyses ATP + H2O = ADP + phosphate + H(+). The RuvA-RuvB-RuvC complex processes Holliday junction (HJ) DNA during genetic recombination and DNA repair, while the RuvA-RuvB complex plays an important role in the rescue of blocked DNA replication forks via replication fork reversal (RFR). RuvA specifically binds to HJ cruciform DNA, conferring on it an open structure. The RuvB hexamer acts as an ATP-dependent pump, pulling dsDNA into and through the RuvAB complex. RuvB forms 2 homohexamers on either side of HJ DNA bound by 1 or 2 RuvA tetramers; 4 subunits per hexamer contact DNA at a time. Coordinated motions by a converter formed by DNA-disengaged RuvB subunits stimulates ATP hydrolysis and nucleotide exchange. Immobilization of the converter enables RuvB to convert the ATP-contained energy into a lever motion, pulling 2 nucleotides of DNA out of the RuvA tetramer per ATP hydrolyzed, thus driving DNA branch migration. The RuvB motors rotate together with the DNA substrate, which together with the progressing nucleotide cycle form the mechanistic basis for DNA recombination by continuous HJ branch migration. Branch migration allows RuvC to scan DNA until it finds its consensus sequence, where it cleaves and resolves cruciform DNA. The protein is Holliday junction branch migration complex subunit RuvB of Methanospirillum hungatei JF-1 (strain ATCC 27890 / DSM 864 / NBRC 100397 / JF-1).